Here is a 460-residue protein sequence, read N- to C-terminus: Phosphoglucomutase (460 aa).

Catalysis depends on Ser103, which acts as the Phosphoserine intermediate. Position 103 (Ser103) interacts with Mg(2+). Residues 103-104 (SH) and Lys113 contribute to the substrate site. Residues Asp239, Asp241, and Asp243 each contribute to the Mg(2+) site. Residues 243–244 (DR), Thr303, and 322–324 (EMS) each bind substrate.

Belongs to the phosphohexose mutase family. The cofactor is Mg(2+).

The protein resides in the cytoplasm. The enzyme catalyses alpha-D-glucose 1-phosphate = alpha-D-glucose 6-phosphate. In terms of biological role, this enzyme participates in both the breakdown and synthesis of glucose. In Neisseria meningitidis serogroup B (strain ATCC BAA-335 / MC58), this protein is Phosphoglucomutase (pgm).